The chain runs to 125 residues: Protein MGF 110-4L (125 aa).

The first 29 residues, 1-29 (MLVVFFLGILGLLANQILGLPTQAGGHLR), serve as a signal peptide directing secretion. Asn-65 carries N-linked (GlcNAc...) asparagine; by host glycosylation. A Prevents secretion from ER motif is present at residues 122–125 (KEDL).

This sequence belongs to the asfivirus MGF 110 family.

It localises to the virion. The protein resides in the host endoplasmic reticulum-Golgi intermediate compartment. Functionally, causes the redistribution of lumenal ER protein to an enlarged ERGIC compartment. This chain is Protein MGF 110-4L, found in Ornithodoros (relapsing fever ticks).